Reading from the N-terminus, the 101-residue chain is Large ribosomal subunit protein uL24 (101 aa).

This sequence belongs to the universal ribosomal protein uL24 family. As to quaternary structure, part of the 50S ribosomal subunit.

In terms of biological role, one of two assembly initiator proteins, it binds directly to the 5'-end of the 23S rRNA, where it nucleates assembly of the 50S subunit. Functionally, one of the proteins that surrounds the polypeptide exit tunnel on the outside of the subunit. This chain is Large ribosomal subunit protein uL24, found in Streptococcus sanguinis (strain SK36).